The chain runs to 306 residues: Glutamyl-Q tRNA(Asp) synthetase (306 aa).

L-glutamate is bound by residues 29 to 33 and Asp-65; that span reads RFAPS. Positions 32 to 42 match the 'HIGH' region motif; it reads PSPTGPLHLGN. Zn(2+) contacts are provided by Cys-121, Cys-123, Tyr-141, and Cys-145. Tyr-188 and Arg-206 together coordinate L-glutamate. A 'KMSKS' region motif is present at residues 244–248; that stretch reads KLAKR. Lys-247 lines the ATP pocket.

It belongs to the class-I aminoacyl-tRNA synthetase family. GluQ subfamily. The cofactor is Zn(2+).

Functionally, catalyzes the tRNA-independent activation of glutamate in presence of ATP and the subsequent transfer of glutamate onto a tRNA(Asp). Glutamate is transferred on the 2-amino-5-(4,5-dihydroxy-2-cyclopenten-1-yl) moiety of the queuosine in the wobble position of the QUC anticodon. This is Glutamyl-Q tRNA(Asp) synthetase from Prochlorococcus marinus (strain MIT 9313).